The following is a 573-amino-acid chain: MHFSTSTSTIGVVAAVLLAALILLYRAALPKPIHGIPYKKGSEKRLLGDAPDLLKWRNETQEVFSYMRKLAKDLNSPVFQLFMRPMGKPWVVITDFREAYDICTNRREEFDRSAFTGEVFGPIVPNSHIQFATDDLWRSHRQLLRDTMSPMFVASVIGPIIHKSASGLVSLWRTKARLANGQPFDAEQDLARCLVDLIVSSSFGYDVKSLKAHEDSLSQKVVKGPKDVPMEFTAGEDTEACTSLITLASGVGMAIRSPFPKIVLPLALRFLPSFASAQRYTHNMISEQAGAAWNKFSKAVNVSRDEQVTSAMDLLVLREEQMARKEGRESRLDLPVVRDELLAFLFAGQETTGSTIGWSLKYLAMNQDIQKKLREELRAAHKRAAQTPGASPTSQEIVDTHIPYVEAFIAENHRFAVTISCMIRHTIKDAVVLGHVIPKGSDIFCLTNGPSYQSPSAPVDESVRSKSSQAAKDKFGVWDETNVGEFKPERWLEKQPNGELRFNRFAGPSNPFGVGPRACFGIKWADLIIKTMVTQIVWNFDIQETPEDLSGIEASDGASHRAQKTFVRLVALQ.

Residues Ile10–Pro30 traverse the membrane as a helical segment. Cys519 serves as a coordination point for heme.

The protein belongs to the cytochrome P450 family. The cofactor is heme.

Its subcellular location is the membrane. The protein operates within secondary metabolite biosynthesis. Its function is as follows. Cytochrome P450 monooxygenase; part of the gene cluster that mediates the biosynthesis of dibenzodioxocinones such as pestalotiollide B, a novel class of inhibitors against cholesterol ester transfer protein (CEPT). The biosynthesis initiates from condensation of acetate and malonate units catalyzed by the non-reducing PKS pks8/GME11356. Pks8/GME11356 lacks a thioesterase (TE) domain, which is important to the cyclizing of the third ring of atrochrysone carboxylic acid, and the esterase GME11355 might play the role of TE and catalyzes the cyclization reaction of the C ring. The lactamase-like protein GME11357 (or other beta-lactamases in Pestalotiopsis microspora) probably hydrolyzes the thioester bond between the ACP of pks8/GME11356 and the intermediate to release atrochrysone carboxylic acid, which is spontaneously dehydrates to form endocrocin anthrone. Endocrocin anthrone is further converted to emodin via the endocrocin intermediate. Emodin is then oxidized by several enzymes such as the Baeyer-Villiger oxidase GME11358, the oxidoreductase GME11367, the short chain dehydrogenase/reductase GME11373, as well as by other oxidoreductases from the cluster, to modify the A and C rings and open the B ring, and finally yield monodictyphenone. The prenyltransferase GME11375 may catalyze the addition reaction between the C5 side chains and the carbon bone of dibenzodioxocinones. The remaining biochemical reactions to the final product dibenzodioxocinones should be methylation catalyzed by methyltransferase GME11366 and reduction and lactonization reaction catalyzed by a series of oxidordeuctases. The sequence is that of Cytochrome P450 monooxygenase GME11363 from Pestalotiopsis microspora.